The sequence spans 242 residues: Megakaryocyte and platelet inhibitory receptor G6b (242 aa).

An N-terminal signal peptide occupies residues 1–17 (MALVLPLLPLLLSKVQG). 2 N-linked (GlcNAc...) asparagine glycosylation sites follow: asparagine 32 and asparagine 112. Residues 141 to 161 (VLIPLLGVGLVLGLGVAGVVW) form a helical membrane-spanning segment. 2 consecutive short sequence motifs (ITIM motif) follow at residues 210-215 (LHYADL) and 236-241 (TVYAVV). Tyrosine 212 bears the Phosphotyrosine mark.

In terms of assembly, interacts (via ITIM motif) with PTPN6 and PTPN11. Binds to heparin. In terms of processing, N-glycosylated. May be O-glycosylated. Post-translationally, phosphorylated. As to expression, expressed in mature megakaryocytes and platelets. Not expressed by immature megakaryocytes.

It localises to the cell membrane. Its function is as follows. Inhibitory receptor that acts as a critical regulator of hematopoietic lineage differentiation, megakaryocyte function and platelet production. Inhibits platelet aggregation and activation by agonists such as ADP and collagen-related peptide. This regulation of megakaryocate function as well as platelet production ann activation is done through the inhibition (via the 2 ITIM motifs) of the receptors CLEC1B and GP6:FcRgamma signaling. Appears to operate in a calcium-independent manner. The chain is Megakaryocyte and platelet inhibitory receptor G6b from Mus musculus (Mouse).